Here is a 749-residue protein sequence, read N- to C-terminus: Phosphate-regulating neutral endopeptidase PHEX (749 aa).

The Cytoplasmic segment spans residues 1 to 20; it reads MEAETGSSVETGKKANRGTR. Residues 21 to 41 traverse the membrane as a helical; Signal-anchor for type II membrane protein segment; the sequence is IALVVFVGGTLVLGTILFLVS. The Extracellular portion of the chain corresponds to 42 to 641; sequence QGLLSLQAKQ…LNVKGKRTLG (600 aa). Residues 53-749 enclose the Peptidase M13 domain; it reads YCLKPECIEA…NRGMDSCRLW (697 aa). An intrachain disulfide couples Cys-54 to Cys-59. N-linked (GlcNAc...) asparagine glycans are attached at residues Asn-71, Asn-238, Asn-263, Asn-290, Asn-301, Asn-377, and Asn-484. 4 cysteine pairs are disulfide-bonded: Cys-77-Cys-733, Cys-85-Cys-693, Cys-142-Cys-406, and Cys-617-Cys-746. His-580 provides a ligand contact to Zn(2+). The active site involves Glu-581. His-584 and Glu-642 together coordinate Zn(2+). The active-site Proton donor is Asp-646. A glycan (N-linked (GlcNAc...) asparagine) is linked at Asn-736.

This sequence belongs to the peptidase M13 family. Interacts with MEPE; the interaction is zinc-dependent (via ASARM motif). Zn(2+) is required as a cofactor. As to expression, specifically expressed in ovary. Expressed at low levels in kidney.

Its subcellular location is the cell membrane. In terms of biological role, peptidase that cleaves SIBLING (small integrin-binding ligand, N-linked glycoprotein)-derived ASARM peptides, thus regulating their biological activity. Cleaves ASARM peptides between Ser and Glu or Asp residues. Regulates osteogenic cell differentiation and bone mineralization through the cleavage of the MEPE-derived ASARM peptide. Promotes dentin mineralization and renal phosphate reabsorption by cleaving DMP1- and MEPE-derived ASARM peptides. Inhibits the cleavage of MEPE by CTSB/cathepsin B thus preventing MEPE degradation. The polypeptide is Phosphate-regulating neutral endopeptidase PHEX (PHEX) (Homo sapiens (Human)).